Here is a 383-residue protein sequence, read N- to C-terminus: Arginine biosynthesis bifunctional protein ArgJ (383 aa).

Substrate is bound by residues Thr146, Lys168, Thr179, Glu259, Asn378, and Thr383. Thr179 acts as the Nucleophile in catalysis.

This sequence belongs to the ArgJ family. In terms of assembly, heterotetramer of two alpha and two beta chains.

The protein resides in the cytoplasm. It catalyses the reaction N(2)-acetyl-L-ornithine + L-glutamate = N-acetyl-L-glutamate + L-ornithine. The catalysed reaction is L-glutamate + acetyl-CoA = N-acetyl-L-glutamate + CoA + H(+). It functions in the pathway amino-acid biosynthesis; L-arginine biosynthesis; L-ornithine and N-acetyl-L-glutamate from L-glutamate and N(2)-acetyl-L-ornithine (cyclic): step 1/1. The protein operates within amino-acid biosynthesis; L-arginine biosynthesis; N(2)-acetyl-L-ornithine from L-glutamate: step 1/4. Functionally, catalyzes two activities which are involved in the cyclic version of arginine biosynthesis: the synthesis of N-acetylglutamate from glutamate and acetyl-CoA as the acetyl donor, and of ornithine by transacetylation between N(2)-acetylornithine and glutamate. The polypeptide is Arginine biosynthesis bifunctional protein ArgJ (Thermobifida fusca (strain YX)).